A 287-amino-acid polypeptide reads, in one-letter code: 4-hydroxybenzoate octaprenyltransferase (287 aa).

9 helical membrane-spanning segments follow: residues 20–40, 43–63, 94–114, 115–135, 137–157, 159–179, 210–230, 235–255, and 266–286; these read IGSLLLLWPTLWALFLAADGL, MHVLVVFVLGVVFMRAAGCVI, LGLFGLLVLVSFVLVLTMNTL, TIMLSVVGLVLAAAYPFMKRY, HLPQLVLGMAFGWSIPMAYAA, AGELPVVAWLLFTANILWTIA, IIIGVLQLSTLVTMILIGHSL, IYYWFLLMASGLFVYQQRLIG, and FLNNNYVGMLIFLGIAISVMM.

It belongs to the UbiA prenyltransferase family. The cofactor is Mg(2+).

It localises to the cell inner membrane. The enzyme catalyses all-trans-octaprenyl diphosphate + 4-hydroxybenzoate = 4-hydroxy-3-(all-trans-octaprenyl)benzoate + diphosphate. The protein operates within cofactor biosynthesis; ubiquinone biosynthesis. Its function is as follows. Catalyzes the prenylation of para-hydroxybenzoate (PHB) with an all-trans polyprenyl group. Mediates the second step in the final reaction sequence of ubiquinone-8 (UQ-8) biosynthesis, which is the condensation of the polyisoprenoid side chain with PHB, generating the first membrane-bound Q intermediate 3-octaprenyl-4-hydroxybenzoate. The sequence is that of 4-hydroxybenzoate octaprenyltransferase from Photobacterium profundum (strain SS9).